Reading from the N-terminus, the 478-residue chain is Nuclear distribution protein PAC1 (478 aa).

Residues 9–41 (QAEELHKAMIAYLLSANLPKSAAALREELADSV) enclose the LisH domain. Residues 60 to 87 (TSVVRLQKKIMDLESRNNALQSELDSAT) adopt a coiled-coil conformation. WD repeat units follow at residues 113-154 (SHRE…RTIK), 156-196 (HTKA…KNIR), 200-247 (GHDH…CVKT), 250-289 (GHVD…TKST), 292-352 (GHEH…IKTL), 354-393 (GHDN…KCVR), 398-439 (AHGH…AASA), and 440-477 (INGV…RVFA).

This sequence belongs to the WD repeat LIS1/nudF family. In terms of assembly, self-associates. Interacts with NDL1 and dynein.

The protein resides in the cytoplasm. It is found in the cytoskeleton. It localises to the spindle pole. Its function is as follows. Positively regulates the activity of the minus-end directed microtubule motor protein dynein. May enhance dynein-mediated microtubule sliding by targeting dynein to the microtubule plus end. Required for nuclear migration during vegetative growth as well as development. Required for retrograde early endosome (EE) transport from the hyphal tip. Required for localization of dynein to the mitotic spindle poles. Recruits additional proteins to the dynein complex at SPBs. This is Nuclear distribution protein PAC1 from Paracoccidioides brasiliensis (strain Pb18).